The primary structure comprises 121 residues: Chorion class CA protein ERA.4 (121 aa).

A signal peptide spans 1-23 (MSSSFFCFFLFCFQTCLIQNVYS). The tract at residues 24 to 57 (QCLGRVGPGGPPLGPYGGPLGGPGYGPVGYGGCG) is left arm. The interval 58–105 (GYGGSGIGNVAVAGELPVAGSAAVLGQVPVIGAVEFAGPACAVGSVSI) is central domain. A right arm region spans residues 106–121 (SGACGPTCGCGGSPYY).

Belongs to the chorion protein family.

In terms of biological role, this protein is one of many from the eggshell of the silk moth. The sequence is that of Chorion class CA protein ERA.4 (ERA.4) from Bombyx mori (Silk moth).